The primary structure comprises 500 residues: MLNINFVNEESSTNQGLIVFIDEQLKLNNNLIALDQQHYELISKTIQNKLQFSGNYGQITVVPSVIKSCAVKYLIIVGLGNVEKLTEAKIEELGGKILQHATCAKIATIGLKIINRINRFTSPTFTSLIASGAFLASYRFHKYKTTLKEVEKFAVESIEILTDNNSEAMKLFEVKKLIAEAVFFTRDISNEPSNIKTPQVYAERIVEILEPLGVNIDVIGEHDIKNLGMGALLGVGQGSQNESKLVVMEYKGGSRDDSTLALVGKGVIFDTGGISLKPSSNMHLMRYDMAGSAAVVGTIIALASQKVPVNVVGVVGLVENMQSGNAQRPGDVVVTMSGQTAEVLNTDAEGRLVLADTVWYVQEKFNPKCVIDVATLTGAITVALGSTYAGCFSNNDELADKLIKAGEAVNEKLWRMPLHDDYDAMINSDIADIANIGNVPGAAGSCTAAHFIKRFIKDGVDWAHLDIAGVANSNNASALCPKGAVGYGVRLLEKFIKEYN.

Residues Lys265 and Asp270 each contribute to the Mn(2+) site. Lys277 is a catalytic residue. Positions 288, 347, and 349 each coordinate Mn(2+). Arg351 is an active-site residue.

Belongs to the peptidase M17 family. Mn(2+) serves as cofactor.

It is found in the cytoplasm. It carries out the reaction Release of an N-terminal amino acid, Xaa-|-Yaa-, in which Xaa is preferably Leu, but may be other amino acids including Pro although not Arg or Lys, and Yaa may be Pro. Amino acid amides and methyl esters are also readily hydrolyzed, but rates on arylamides are exceedingly low.. The enzyme catalyses Release of an N-terminal amino acid, preferentially leucine, but not glutamic or aspartic acids.. Presumably involved in the processing and regular turnover of intracellular proteins. Catalyzes the removal of unsubstituted N-terminal amino acids from various peptides. This is Cytosol aminopeptidase (pepA) from Rickettsia prowazekii (strain Madrid E).